Here is a 541-residue protein sequence, read N- to C-terminus: Light-independent protochlorophyllide reductase subunit B (541 aa).

Aspartate 36 serves as a coordination point for [4Fe-4S] cluster. Aspartate 287 serves as the catalytic Proton donor. Glycine 422–leucine 423 is a substrate binding site.

Belongs to the ChlB/BchB/BchZ family. As to quaternary structure, protochlorophyllide reductase is composed of three subunits; BchL, BchN and BchB. Forms a heterotetramer of two BchB and two BchN subunits. [4Fe-4S] cluster serves as cofactor.

The enzyme catalyses chlorophyllide a + oxidized 2[4Fe-4S]-[ferredoxin] + 2 ADP + 2 phosphate = protochlorophyllide a + reduced 2[4Fe-4S]-[ferredoxin] + 2 ATP + 2 H2O. The protein operates within porphyrin-containing compound metabolism; bacteriochlorophyll biosynthesis (light-independent). Component of the dark-operative protochlorophyllide reductase (DPOR) that uses Mg-ATP and reduced ferredoxin to reduce ring D of protochlorophyllide (Pchlide) to form chlorophyllide a (Chlide). This reaction is light-independent. The NB-protein (BchN-BchB) is the catalytic component of the complex. The sequence is that of Light-independent protochlorophyllide reductase subunit B from Rhodopseudomonas palustris (strain HaA2).